The sequence spans 1397 residues: DNA-directed RNA polymerase subunit beta (1397 aa).

It belongs to the RNA polymerase beta chain family. As to quaternary structure, the RNAP catalytic core consists of 2 alpha, 1 beta, 1 beta' and 1 omega subunit. When a sigma factor is associated with the core the holoenzyme is formed, which can initiate transcription.

It carries out the reaction RNA(n) + a ribonucleoside 5'-triphosphate = RNA(n+1) + diphosphate. Its function is as follows. DNA-dependent RNA polymerase catalyzes the transcription of DNA into RNA using the four ribonucleoside triphosphates as substrates. The protein is DNA-directed RNA polymerase subunit beta of Rhodospirillum centenum (strain ATCC 51521 / SW).